The chain runs to 357 residues: Histidinol-phosphate aminotransferase (357 aa).

At Lys-212 the chain carries N6-(pyridoxal phosphate)lysine.

Belongs to the class-II pyridoxal-phosphate-dependent aminotransferase family. Histidinol-phosphate aminotransferase subfamily. As to quaternary structure, homodimer. It depends on pyridoxal 5'-phosphate as a cofactor.

The enzyme catalyses L-histidinol phosphate + 2-oxoglutarate = 3-(imidazol-4-yl)-2-oxopropyl phosphate + L-glutamate. It functions in the pathway amino-acid biosynthesis; L-histidine biosynthesis; L-histidine from 5-phospho-alpha-D-ribose 1-diphosphate: step 7/9. The chain is Histidinol-phosphate aminotransferase from Pectobacterium carotovorum subsp. carotovorum (strain PC1).